The sequence spans 790 residues: Mitochondrial intermediate peptidase (790 aa).

The N-terminal 29 residues, 1–29 (MLKRLARNNSSPWICSRCLQQSQRQRRFN), are a transit peptide targeting the mitochondrion. Zn(2+) is bound at residue histidine 570. Residue glutamate 571 is part of the active site. Residues histidine 574 and histidine 577 each contribute to the Zn(2+) site.

The protein belongs to the peptidase M3 family. It depends on Zn(2+) as a cofactor.

It localises to the mitochondrion matrix. The enzyme catalyses Release of an N-terminal octapeptide as second stage of processing of some proteins imported into the mitochondrion.. Its function is as follows. Cleaves proteins, imported into the mitochondrion, to their mature size. While most mitochondrial precursor proteins are processed to the mature form in one step by mitochondrial processing peptidase (MPP), the sequential cleavage by MIP of an octapeptide after initial processing by MPP is a required step for a subgroup of nuclear-encoded precursor proteins destined for the matrix or the inner membrane. The chain is Mitochondrial intermediate peptidase (OCT1) from Phaeosphaeria nodorum (strain SN15 / ATCC MYA-4574 / FGSC 10173) (Glume blotch fungus).